The chain runs to 491 residues: Cytochrome P450 2B2 (491 aa).

Phosphoserine; by PKA is present on Ser-128. Position 436 (Cys-436) interacts with heme.

The protein belongs to the cytochrome P450 family. It depends on heme as a cofactor. Phosphorylation is accompanied by a decrease in enzyme activity.

The protein resides in the endoplasmic reticulum membrane. Its subcellular location is the microsome membrane. The catalysed reaction is an organic molecule + reduced [NADPH--hemoprotein reductase] + O2 = an alcohol + oxidized [NADPH--hemoprotein reductase] + H2O + H(+). Cytochromes P450 are a group of heme-thiolate monooxygenases. In liver microsomes, this enzyme is involved in an NADPH-dependent electron transport pathway. It oxidizes a variety of structurally unrelated compounds, including steroids, fatty acids, and xenobiotics. This chain is Cytochrome P450 2B2 (Cyp2b2), found in Rattus norvegicus (Rat).